Reading from the N-terminus, the 284-residue chain is Bifunctional protein FolD (284 aa).

166 to 168 is an NADP(+) binding site; sequence GAS.

It belongs to the tetrahydrofolate dehydrogenase/cyclohydrolase family. As to quaternary structure, homodimer.

It catalyses the reaction (6R)-5,10-methylene-5,6,7,8-tetrahydrofolate + NADP(+) = (6R)-5,10-methenyltetrahydrofolate + NADPH. The enzyme catalyses (6R)-5,10-methenyltetrahydrofolate + H2O = (6R)-10-formyltetrahydrofolate + H(+). It functions in the pathway one-carbon metabolism; tetrahydrofolate interconversion. Its function is as follows. Catalyzes the oxidation of 5,10-methylenetetrahydrofolate to 5,10-methenyltetrahydrofolate and then the hydrolysis of 5,10-methenyltetrahydrofolate to 10-formyltetrahydrofolate. The polypeptide is Bifunctional protein FolD (Legionella pneumophila (strain Paris)).